The chain runs to 154 residues: uncharacterized protein (154 aa).

The first 21 residues, 1-21 (MSISSGSFAQPAAVVSSPGVT), serve as a signal peptide directing secretion.

This sequence belongs to the ivy family.

The protein resides in the periplasm. This is an uncharacterized protein from Yersinia pestis.